We begin with the raw amino-acid sequence, 254 residues long: Small ribosomal subunit protein uS2 (254 aa).

The protein belongs to the universal ribosomal protein uS2 family.

The chain is Small ribosomal subunit protein uS2 from Legionella pneumophila (strain Corby).